The primary structure comprises 357 residues: Alanine racemase (357 aa).

Lys33 functions as the Proton acceptor; specific for D-alanine in the catalytic mechanism. Lys33 is subject to N6-(pyridoxal phosphate)lysine. Substrate is bound at residue Arg129. The active-site Proton acceptor; specific for L-alanine is the Tyr253. Met301 serves as a coordination point for substrate.

This sequence belongs to the alanine racemase family. The cofactor is pyridoxal 5'-phosphate.

It catalyses the reaction L-alanine = D-alanine. It functions in the pathway amino-acid biosynthesis; D-alanine biosynthesis; D-alanine from L-alanine: step 1/1. Functionally, catalyzes the interconversion of L-alanine and D-alanine. May also act on other amino acids. This chain is Alanine racemase (alr), found in Pseudomonas syringae pv. syringae (strain B728a).